Reading from the N-terminus, the 216-residue chain is UPF0502 protein VCM66_A0698 (216 aa).

The protein belongs to the UPF0502 family.

The sequence is that of UPF0502 protein VCM66_A0698 from Vibrio cholerae serotype O1 (strain M66-2).